Reading from the N-terminus, the 117-residue chain is Snaclec CHH-B subunit beta (117 aa).

Cystine bridges form between Cys2-Cys13, Cys30-Cys115, and Cys92-Cys107. In terms of domain architecture, C-type lectin spans 9 to 116; the sequence is YEGHCYRVFQ…CSKTHNVVCK (108 aa).

This sequence belongs to the snaclec family. As to quaternary structure, heterodimer of subunits alpha and beta; disulfide-linked. Expressed by the venom gland.

The protein localises to the secreted. Binds to the subunit GPIbalpha (GP1BA) of the platelet GPIb/V/IX receptor system. It inhibits ristocetin- and vWF-induced platelet aggregation in platelet-rich plasma by inhibiting the binding of vWF to GPIbalpha. The polypeptide is Snaclec CHH-B subunit beta (Crotalus horridus (Timber rattlesnake)).